Consider the following 147-residue polypeptide: D-aminoacyl-tRNA deacylase (147 aa).

The Gly-cisPro motif, important for rejection of L-amino acids motif lies at 136-137; it reads GP.

The protein belongs to the DTD family. Homodimer.

It is found in the cytoplasm. The enzyme catalyses glycyl-tRNA(Ala) + H2O = tRNA(Ala) + glycine + H(+). It carries out the reaction a D-aminoacyl-tRNA + H2O = a tRNA + a D-alpha-amino acid + H(+). In terms of biological role, an aminoacyl-tRNA editing enzyme that deacylates mischarged D-aminoacyl-tRNAs. Also deacylates mischarged glycyl-tRNA(Ala), protecting cells against glycine mischarging by AlaRS. Acts via tRNA-based rather than protein-based catalysis; rejects L-amino acids rather than detecting D-amino acids in the active site. By recycling D-aminoacyl-tRNA to D-amino acids and free tRNA molecules, this enzyme counteracts the toxicity associated with the formation of D-aminoacyl-tRNA entities in vivo and helps enforce protein L-homochirality. The polypeptide is D-aminoacyl-tRNA deacylase (Streptococcus agalactiae serotype III (strain NEM316)).